Reading from the N-terminus, the 598-residue chain is Protein VASCULAR ASSOCIATED DEATH 1, chloroplastic (598 aa).

Positions 1–11 (MAMLSTASVSG) are enriched in polar residues. The segment at 1-64 (MAMLSTASVS…PSRGGDNQSE (64 aa)) is disordered. The N-terminal 68 residues, 1–68 (MAMLSTASVS…GDNQSEVISK (68 aa)), are a transit peptide targeting the chloroplast. An N-linked (GlcNAc...) asparagine glycan is attached at Asn-61. One can recognise a GRAM domain in the interval 70-134 (EEYRQLFRLP…PFAEISCVKR (65 aa)). Residues 272–444 (DFTKVAEAKF…MAHELLKQKK (173 aa)) form the VASt domain. N-linked (GlcNAc...) asparagine glycans are attached at residues Asn-329 and Asn-494. A helical transmembrane segment spans residues 507-527 (QVIVLAFAVILLMQVTIVVLL). A coiled-coil region spans residues 553–595 (WLEKRMHFLREEMMMVEDRLQRMRQDHAALKAQFHHLERLLRR).

It is found in the membrane. Its subcellular location is the plastid. The protein localises to the chloroplast. Involved in ethylene- and salicylic acid-dependent cell death control associated with cells in the vicinity of vascular bundles. The chain is Protein VASCULAR ASSOCIATED DEATH 1, chloroplastic from Arabidopsis thaliana (Mouse-ear cress).